The chain runs to 59 residues: MAVPKRKTSPSRRGMRRSADALKAPTYVEDKNSGELRRPHHIDLKSGMYRGRQVLEPKE.

The span at 1–16 shows a compositional bias: basic residues; that stretch reads MAVPKRKTSPSRRGMR. Positions 1 to 59 are disordered; it reads MAVPKRKTSPSRRGMRRSADALKAPTYVEDKNSGELRRPHHIDLKSGMYRGRQVLEPKE. Over residues 28 to 44 the composition is skewed to basic and acidic residues; that stretch reads VEDKNSGELRRPHHIDL.

It belongs to the bacterial ribosomal protein bL32 family.

In Brucella abortus (strain S19), this protein is Large ribosomal subunit protein bL32.